The sequence spans 126 residues: Holo-[acyl-carrier-protein] synthase (126 aa).

Mg(2+)-binding residues include D9 and E58.

The protein belongs to the P-Pant transferase superfamily. AcpS family. It depends on Mg(2+) as a cofactor.

The protein localises to the cytoplasm. It carries out the reaction apo-[ACP] + CoA = holo-[ACP] + adenosine 3',5'-bisphosphate + H(+). Transfers the 4'-phosphopantetheine moiety from coenzyme A to a Ser of acyl-carrier-protein. This chain is Holo-[acyl-carrier-protein] synthase, found in Escherichia coli (strain K12 / MC4100 / BW2952).